The following is a 281-amino-acid chain: Sulfur carrier protein FdhD (281 aa).

The active-site Cysteine persulfide intermediate is C127. Residue F264 to R269 participates in Mo-bis(molybdopterin guanine dinucleotide) binding.

The protein belongs to the FdhD family.

It is found in the cytoplasm. Its function is as follows. Required for formate dehydrogenase (FDH) activity. Acts as a sulfur carrier protein that transfers sulfur from IscS to the molybdenum cofactor prior to its insertion into FDH. This Mannheimia succiniciproducens (strain KCTC 0769BP / MBEL55E) protein is Sulfur carrier protein FdhD.